Consider the following 256-residue polypeptide: Type III pantothenate kinase 1 (256 aa).

Residue 6 to 13 coordinates ATP; the sequence is DIGNSHIF. 107–110 lines the substrate pocket; sequence GADR. Aspartate 109 functions as the Proton acceptor in the catalytic mechanism. Position 130 (aspartate 130) interacts with K(+). Position 133 (threonine 133) interacts with ATP. Threonine 185 provides a ligand contact to substrate.

The protein belongs to the type III pantothenate kinase family. Homodimer. The cofactor is NH4(+). K(+) is required as a cofactor.

Its subcellular location is the cytoplasm. The enzyme catalyses (R)-pantothenate + ATP = (R)-4'-phosphopantothenate + ADP + H(+). The protein operates within cofactor biosynthesis; coenzyme A biosynthesis; CoA from (R)-pantothenate: step 1/5. Functionally, catalyzes the phosphorylation of pantothenate (Pan), the first step in CoA biosynthesis. The protein is Type III pantothenate kinase 1 of Francisella tularensis subsp. holarctica (strain LVS).